Reading from the N-terminus, the 154-residue chain is Protein FasC (154 aa).

The protein belongs to the periplasmic pilus chaperone family.

In terms of biological role, could be required for the biogenesis of a putative fimbria. In Escherichia coli, this protein is Protein FasC (fasC).